Consider the following 491-residue polypeptide: Ketol-acid reductoisomerase (NADP(+)) (491 aa).

One can recognise a KARI N-terminal Rossmann domain in the interval 14 to 208 (LDQLGRCRFM…GGHRAGVLES (195 aa)). Residues 45 to 48 (CGAQ), Arg-68, Arg-76, Ser-78, and 108 to 110 (DKQ) each bind NADP(+). His-132 is an active-site residue. NADP(+) is bound at residue Gly-158. 2 consecutive KARI C-terminal knotted domains span residues 209–344 (SFVA…NAPK) and 345–485 (YEGK…MTDM). 4 residues coordinate Mg(2+): Asp-217, Glu-221, Glu-389, and Glu-393. Ser-414 is a binding site for substrate.

The protein belongs to the ketol-acid reductoisomerase family. Mg(2+) serves as cofactor.

The enzyme catalyses (2R)-2,3-dihydroxy-3-methylbutanoate + NADP(+) = (2S)-2-acetolactate + NADPH + H(+). It catalyses the reaction (2R,3R)-2,3-dihydroxy-3-methylpentanoate + NADP(+) = (S)-2-ethyl-2-hydroxy-3-oxobutanoate + NADPH + H(+). It functions in the pathway amino-acid biosynthesis; L-isoleucine biosynthesis; L-isoleucine from 2-oxobutanoate: step 2/4. The protein operates within amino-acid biosynthesis; L-valine biosynthesis; L-valine from pyruvate: step 2/4. In terms of biological role, involved in the biosynthesis of branched-chain amino acids (BCAA). Catalyzes an alkyl-migration followed by a ketol-acid reduction of (S)-2-acetolactate (S2AL) to yield (R)-2,3-dihydroxy-isovalerate. In the isomerase reaction, S2AL is rearranged via a Mg-dependent methyl migration to produce 3-hydroxy-3-methyl-2-ketobutyrate (HMKB). In the reductase reaction, this 2-ketoacid undergoes a metal-dependent reduction by NADPH to yield (R)-2,3-dihydroxy-isovalerate. This chain is Ketol-acid reductoisomerase (NADP(+)), found in Pasteurella multocida (strain Pm70).